We begin with the raw amino-acid sequence, 323 residues long: Probable cell division protein WhiA (323 aa).

A DNA-binding region (H-T-H motif) is located at residues 275-309; sequence TLKELGEMLTTGQVSKSGINHRLRKLDQIAERLRS.

This sequence belongs to the WhiA family.

In terms of biological role, involved in cell division and chromosome segregation. The protein is Probable cell division protein WhiA of Listeria monocytogenes serotype 4a (strain HCC23).